A 126-amino-acid chain; its full sequence is MVRLFHNPIKCLFYRGSRKTREKKLRKSLKKLNFYHPPGDCCQIYRLLENVPGGTYFITENMTNELIMIVKDSVDKKIKSVKLNFYGSYIKIHQHYYINIYMYLMRYTQIYKYPLICFNKYSYCNS.

This sequence belongs to the asfivirus MGF 100 family.

In terms of biological role, plays a role in virus cell tropism, and may be required for efficient virus replication in macrophages. The sequence is that of Protein MGF 100-1R from Ornithodoros (relapsing fever ticks).